The sequence spans 106 residues: UPF0145 protein NE1032 (106 aa).

It belongs to the UPF0145 family.

The chain is UPF0145 protein NE1032 from Nitrosomonas europaea (strain ATCC 19718 / CIP 103999 / KCTC 2705 / NBRC 14298).